Here is a 913-residue protein sequence, read N- to C-terminus: Rab GTPase-activating protein tbc-8 (913 aa).

Positions 1–24 are disordered; that stretch reads MQMFRHSSADMWRAKKPTLERRST. The region spanning 106 to 240 is the RUN domain; sequence NLNSPYVTSL…TYRRMSNRIE (135 aa). The 248-residue stretch at 597–844 folds into the Rab-GAP TBC domain; it reads INTKEVRRMA…KVWEVIWAAQ (248 aa).

The protein belongs to the RUTBC family. As to quaternary structure, interacts with rab-19. Interacts with ric-19; the interaction is direct and may be required for the activation of rab-2 and dense vesicle maturation in cholinergic motoneurons. Interacts (via RUN domain) with rund-1. Does not interact with unc-108 (GTP-bound form). Expressed in neurons in the head, tail and ventral nerve cord (at protein level).

It localises to the golgi apparatus. Its subcellular location is the trans-Golgi network. The protein resides in the early endosome. The protein localises to the cytoplasmic vesicle membrane. In terms of biological role, interacts with numerous Rab family members, functioning as Rab effector for some, and as GTPase activator for others. GTPase activator for rab-2. In association with ric-19 activates rab-2 during dense core vesicle maturation in cholinergic motoneurons. The protein is Rab GTPase-activating protein tbc-8 of Caenorhabditis elegans.